The primary structure comprises 226 residues: Myosin regulatory light chain 10 (226 aa).

EF-hand domains are found at residues 84–119 (NSPASASQAFTIMDQNRDGFIDKEDLRDTFAALGRI), 154–189 (DPEETILHAFKVFDTEGKGFVKADVIKEKLMTQADR), and 190–225 (FSEEEVKQMFAAFPPDVCGNLDYRNLCYVITHGEEK). Ca(2+) contacts are provided by Asp-97, Asn-99, Asp-101, and Asp-108.

In terms of assembly, myosin is a hexamer of 2 heavy chains and 4 light chains.

The polypeptide is Myosin regulatory light chain 10 (MYL10) (Homo sapiens (Human)).